We begin with the raw amino-acid sequence, 439 residues long: GTPase Der (439 aa).

EngA-type G domains are found at residues 2-168 (ATVL…EEKG) and 181-357 (IKIA…SSYT). GTP contacts are provided by residues 8–15 (GKPNVGKS), 55–59 (DTCGV), 118–121 (NKTE), 187–194 (GRPNVGKS), 234–238 (DTAGL), and 300–303 (NKWD). The region spanning 358–439 (TKVPSSALNS…PIFLKFKKSR (82 aa)) is the KH-like domain.

This sequence belongs to the TRAFAC class TrmE-Era-EngA-EngB-Septin-like GTPase superfamily. EngA (Der) GTPase family. Associates with the 50S ribosomal subunit.

Its function is as follows. GTPase that plays an essential role in the late steps of ribosome biogenesis. This is GTPase Der from Thermotoga neapolitana (strain ATCC 49049 / DSM 4359 / NBRC 107923 / NS-E).